The following is a 53-amino-acid chain: Light-harvesting protein B-800/850 alpha chain (53 aa).

Residues 1–14 (MNQGKIWTVVNPSV) are Cytoplasmic-facing. The chain crosses the membrane as a helical span at residues 15 to 35 (GLPLLLGSVTVIAILVHAAVL). H31 provides a ligand contact to a bacteriochlorophyll. At 36-53 (SHTTWFPAYWQGGLKKAA) the chain is on the periplasmic side.

This sequence belongs to the antenna complex alpha subunit family. As to quaternary structure, the core complex is formed by different alpha and beta chains, binding bacteriochlorophyll molecules, and arranged most probably in tetrameric structures disposed around the reaction center. The non-pigmented gamma chains may constitute additional components.

It localises to the cell inner membrane. Antenna complexes are light-harvesting systems, which transfer the excitation energy to the reaction centers. The protein is Light-harvesting protein B-800/850 alpha chain of Rhodoblastus acidophilus (Rhodopseudomonas acidophila).